The chain runs to 210 residues: Ribonuclease HII (210 aa).

Residues 18-210 (GLIAGVDEVG…FKPVKALLGL (193 aa)) form the RNase H type-2 domain. 3 residues coordinate a divalent metal cation: D24, E25, and D116.

The protein belongs to the RNase HII family. Mn(2+) is required as a cofactor. The cofactor is Mg(2+).

The protein resides in the cytoplasm. It catalyses the reaction Endonucleolytic cleavage to 5'-phosphomonoester.. Endonuclease that specifically degrades the RNA of RNA-DNA hybrids. The chain is Ribonuclease HII from Shewanella baltica (strain OS223).